The primary structure comprises 554 residues: Phenylalanine--tRNA ligase beta subunit (554 aa).

Positions leucine 276–glycine 351 constitute a B5 domain. Mg(2+) is bound by residues aspartate 329, aspartate 335, glutamate 338, and glutamate 339.

Belongs to the phenylalanyl-tRNA synthetase beta subunit family. Type 2 subfamily. In terms of assembly, tetramer of two alpha and two beta subunits. The cofactor is Mg(2+).

It localises to the cytoplasm. It carries out the reaction tRNA(Phe) + L-phenylalanine + ATP = L-phenylalanyl-tRNA(Phe) + AMP + diphosphate + H(+). The chain is Phenylalanine--tRNA ligase beta subunit from Methanococcus vannielii (strain ATCC 35089 / DSM 1224 / JCM 13029 / OCM 148 / SB).